Here is a 210-residue protein sequence, read N- to C-terminus: Large ribosomal subunit protein bL25 (210 aa).

The span at 191–200 (EAPAEGAAAP) shows a compositional bias: low complexity. The tract at residues 191-210 (EAPAEGAAAPAPAPAKKGKK) is disordered.

It belongs to the bacterial ribosomal protein bL25 family. CTC subfamily. In terms of assembly, part of the 50S ribosomal subunit; part of the 5S rRNA/L5/L18/L25 subcomplex. Contacts the 5S rRNA. Binds to the 5S rRNA independently of L5 and L18.

This is one of the proteins that binds to the 5S RNA in the ribosome where it forms part of the central protuberance. This chain is Large ribosomal subunit protein bL25, found in Paracidovorax citrulli (strain AAC00-1) (Acidovorax citrulli).